The chain runs to 332 residues: Adenine deaminase (332 aa).

Positions 16, 18, and 196 each coordinate Zn(2+). Catalysis depends on E199, which acts as the Proton donor. D277 lines the Zn(2+) pocket. Residue D278 coordinates substrate.

Belongs to the metallo-dependent hydrolases superfamily. Adenosine and AMP deaminases family. Adenine deaminase type 2 subfamily. Requires Zn(2+) as cofactor.

The enzyme catalyses adenine + H2O + H(+) = hypoxanthine + NH4(+). Its function is as follows. Catalyzes the hydrolytic deamination of adenine to hypoxanthine. Plays an important role in the purine salvage pathway and in nitrogen catabolism. In Acinetobacter baylyi (strain ATCC 33305 / BD413 / ADP1), this protein is Adenine deaminase.